Consider the following 252-residue polypeptide: Insulin-induced gene 1 protein (252 aa).

At 1 to 59 (MPRLESGAWSCSCAARARHAARPGEAAPKADAMQSPSPSAGRAEREASGGSATTWRQHL) the chain is on the cytoplasmic side. Residues 22–48 (RPGEAAPKADAMQSPSPSAGRAEREAS) are disordered. The helical transmembrane segment at 60–82 (VQRSVVLFVVGAFMALVLNLLQI) threads the bilayer. Topologically, residues 83 to 101 (QRNVTLFPDEVIATLFSSA) are extracellular. The helical transmembrane segment at 102 to 119 (WWVPPCCGTAAAVVGLLY) threads the bilayer. At 120–134 (PCIDSHLGEPHKFKR) the chain is on the cytoplasmic side. Residues 135–157 (EWASVMRCIAVFVGINHASAKLD) traverse the membrane as a helical segment. Residues 158–160 (FAN) are Extracellular-facing. A helical transmembrane segment spans residues 161–179 (NVQLSLTLAALSLGLWWTF). The Cytoplasmic portion of the chain corresponds to 180-184 (DRSRS). A helical transmembrane segment spans residues 185–206 (GLGLGITIAFVATLITQFLVYN). Topologically, residues 207–220 (GVYQYTSPDFLYIR) are extracellular. Residues 221 to 238 (SWLPCIFFSGGVTVGNIG) traverse the membrane as a helical segment. Topologically, residues 239-252 (RQLAMGIPEKPHND) are cytoplasmic. A KxHxx motif is present at residues 246-252 (PEKPHND).

This sequence belongs to the INSIG family. In terms of assembly, interacts with SCAP; interaction is direct and only takes place in the presence of sterols; it prevents interaction between SCAP and the coat protein complex II (COPII). Associates with the SCAP-SREBP complex; association is mediated via its interaction with SCAP and only takes place in the presence of sterols.

The protein localises to the endoplasmic reticulum membrane. Oxysterol-binding protein that mediates feedback control of cholesterol synthesis by controlling both endoplasmic reticulum to Golgi transport of SCAP and degradation of HMGCR. Acts as a negative regulator of cholesterol biosynthesis by mediating the retention of the SCAP-SREBP complex in the endoplasmic reticulum, thereby blocking the processing of sterol regulatory element-binding proteins (SREBPs). Binds oxysterol, including 25-hydroxycholesterol, regulating interaction with SCAP and retention of the SCAP-SREBP complex in the endoplasmic reticulum. In presence of oxysterol, interacts with SCAP, retaining the SCAP-SREBP complex in the endoplasmic reticulum, thereby preventing SCAP from escorting SREBPs to the Golgi. Sterol deprivation reduces oxysterol-binding, disrupting the interaction between INSIG1 and SCAP, thereby promoting Golgi transport of the SCAP-SREBP complex, followed by processing and nuclear translocation of SREBPs. Also regulates cholesterol synthesis by regulating degradation of HMGCR. This is Insulin-induced gene 1 protein from Gallus gallus (Chicken).